A 215-amino-acid chain; its full sequence is Ras-related protein Rab-42 (215 aa).

GTP-binding residues include G19, G21, K22, T23, and T44. Positions 23, 44, and 68 each coordinate Mg(2+). Residues G71, K128, D130, A157, and K158 each contribute to the GTP site. Positions 196 to 215 (HRSPNPRSSSRKQDSGTCQC) are disordered. 2 S-geranylgeranyl cysteine lipidation sites follow: C213 and C215.

Belongs to the small GTPase superfamily. Rab family. Mg(2+) serves as cofactor.

It is found in the membrane. The catalysed reaction is GTP + H2O = GDP + phosphate + H(+). With respect to regulation, regulated by guanine nucleotide exchange factors (GEFs) which promote the exchange of bound GDP for free GTP. Regulated by GTPase activating proteins (GAPs) which increase the GTP hydrolysis activity. Inhibited by GDP dissociation inhibitors (GDIs). Functionally, the small GTPases Rab are key regulators of intracellular membrane trafficking, from the formation of transport vesicles to their fusion with membranes. Rabs cycle between an inactive GDP-bound form and an active GTP-bound form that is able to recruit to membranes different sets of downstream effectors directly responsible for vesicle formation, movement, tethering and fusion. The physiological function of RAB42 remains undefined. This is Ras-related protein Rab-42 from Mus musculus (Mouse).